A 212-amino-acid polypeptide reads, in one-letter code: MEIERINDSTVKFFITYKDIESRGFDRDEIWYNRERGEELFFEMMNEANDREDFELEGPLWIQVHALEKGLEIVVTRGQISDGNVKLEIPVTQEDGDGQGQESSMMTEDDFLEESLEIVIGFADFEDIVDLSHNFFIDDINNTLVHFEGTYYLHVVFNDETYSEDEQDDMLSQMLEYGYESDLSIYRIMEYGKVIIDSNALTVVREQFPKRA.

Belongs to the MecA family. Homodimer.

Enables the recognition and targeting of unfolded and aggregated proteins to the ClpC protease or to other proteins involved in proteolysis. Acts negatively in the development of competence by binding ComK and recruiting it to the ClpCP protease. When overexpressed, inhibits sporulation. Also involved in Spx degradation by ClpC. This is Adapter protein MecA 2 (mecA2) from Halalkalibacterium halodurans (strain ATCC BAA-125 / DSM 18197 / FERM 7344 / JCM 9153 / C-125) (Bacillus halodurans).